The chain runs to 180 residues: Interleukin-17B (180 aa).

The N-terminal stretch at 1 to 20 (MDWPHNLLFLLTISIFLGLG) is a signal peptide. The interval 22–44 (PRSPKSKRKGQGRPGPLAPGPHQ) is disordered. Asn75 carries N-linked (GlcNAc...) asparagine glycosylation. Cystine bridges form between Cys121–Cys176 and Cys126–Cys178.

This sequence belongs to the IL-17 family. Expressed in adult pancreas, small intestine, stomach, spinal cord and testis. Less pronounced expression in prostate, colon mucosal lining, and ovary.

Its subcellular location is the secreted. Stimulates the release of tumor necrosis factor alpha and IL-1-beta from the monocytic cell line THP-1. The protein is Interleukin-17B (IL17B) of Homo sapiens (Human).